Here is a 313-residue protein sequence, read N- to C-terminus: Ribosomal RNA small subunit methyltransferase H (313 aa).

S-adenosyl-L-methionine is bound by residues 35–37, aspartate 55, phenylalanine 79, aspartate 101, and glutamine 108; that span reads GGH.

The protein belongs to the methyltransferase superfamily. RsmH family.

The protein localises to the cytoplasm. It catalyses the reaction cytidine(1402) in 16S rRNA + S-adenosyl-L-methionine = N(4)-methylcytidine(1402) in 16S rRNA + S-adenosyl-L-homocysteine + H(+). Functionally, specifically methylates the N4 position of cytidine in position 1402 (C1402) of 16S rRNA. This Escherichia coli O7:K1 (strain IAI39 / ExPEC) protein is Ribosomal RNA small subunit methyltransferase H.